The following is an 89-amino-acid chain: Cytochrome b (89 aa).

Transmembrane regions (helical) follow at residues 38-58 (FGPL…FLAM) and 82-89 (WLLRYMHA). Histidine 88 lines the heme b pocket.

The protein belongs to the cytochrome b family. The main subunits of complex b-c1 are: cytochrome b, cytochrome c1 and the Rieske protein. It depends on heme b as a cofactor.

The protein resides in the mitochondrion inner membrane. In terms of biological role, component of the ubiquinol-cytochrome c reductase complex (complex III or cytochrome b-c1 complex) that is part of the mitochondrial respiratory chain. The b-c1 complex mediates electron transfer from ubiquinol to cytochrome c. Contributes to the generation of a proton gradient across the mitochondrial membrane that is then used for ATP synthesis. The polypeptide is Cytochrome b (MT-CYB) (Brassica napus (Rape)).